Reading from the N-terminus, the 473-residue chain is Protein TED1 (473 aa).

Residues 1 to 8 (MLRCAVKK) lie on the Cytoplasmic side of the membrane. A helical transmembrane segment spans residues 9 to 29 (FAYFATFLTIVANIYIYTYPS). Topologically, residues 30–451 (FHPEQCSWNC…FSLCPFAIQH (422 aa)) are lumenal. N-linked (GlcNAc...) asparagine glycosylation is found at Asn-38, Asn-147, Asn-229, Asn-266, and Asn-307. Residues 452–472 (VWWFAKVSLLVTIFTWSSLLF) traverse the membrane as a helical segment. A topological domain (cytoplasmic) is located at residue Val-473.

In terms of processing, N-glycosylated.

The protein resides in the endoplasmic reticulum membrane. Functionally, acts together with EMP24 and ERV25 in cargo exit from the endoplasmic reticulum. The chain is Protein TED1 (TED1) from Saccharomyces cerevisiae (strain ATCC 204508 / S288c) (Baker's yeast).